We begin with the raw amino-acid sequence, 170 residues long: Large ribosomal subunit protein uL10 (170 aa).

The protein belongs to the universal ribosomal protein uL10 family. Part of the ribosomal stalk of the 50S ribosomal subunit. The N-terminus interacts with L11 and the large rRNA to form the base of the stalk. The C-terminus forms an elongated spine to which L12 dimers bind in a sequential fashion forming a multimeric L10(L12)X complex.

In terms of biological role, forms part of the ribosomal stalk, playing a central role in the interaction of the ribosome with GTP-bound translation factors. The chain is Large ribosomal subunit protein uL10 (rplJ) from Chlamydia pneumoniae (Chlamydophila pneumoniae).